Here is a 313-residue protein sequence, read N- to C-terminus: Formimidoylglutamase (313 aa).

The Mn(2+) site is built by histidine 130, aspartate 155, histidine 157, aspartate 159, aspartate 241, and aspartate 243.

This sequence belongs to the arginase family. It depends on Mn(2+) as a cofactor.

The enzyme catalyses N-formimidoyl-L-glutamate + H2O = formamide + L-glutamate. It participates in amino-acid degradation; L-histidine degradation into L-glutamate; L-glutamate from N-formimidoyl-L-glutamate (hydrolase route): step 1/1. In terms of biological role, catalyzes the conversion of N-formimidoyl-L-glutamate to L-glutamate and formamide. This chain is Formimidoylglutamase, found in Salmonella schwarzengrund (strain CVM19633).